A 172-amino-acid polypeptide reads, in one-letter code: T-cell receptor gamma chain C region C7.5 (172 aa).

A c region region spans residues 1-140; the sequence is DKKLDADISP…QFTITSAYYT (140 aa). A helical membrane pass occupies residues 141-160; sequence YLLLLLKSVIYLAIISFSLL. Residues 161 to 172 lie on the Cytoplasmic side of the membrane; it reads RRTSVCCNEKKS.

Its subcellular location is the membrane. The protein is T-cell receptor gamma chain C region C7.5 of Mus musculus (Mouse).